A 431-amino-acid polypeptide reads, in one-letter code: Trigger factor (431 aa).

A PPIase FKBP-type domain is found at 165–250; it reads GDTVVIDFDG…IHELKRKELP (86 aa).

This sequence belongs to the FKBP-type PPIase family. Tig subfamily.

The protein resides in the cytoplasm. It carries out the reaction [protein]-peptidylproline (omega=180) = [protein]-peptidylproline (omega=0). Involved in protein export. Acts as a chaperone by maintaining the newly synthesized protein in an open conformation. Functions as a peptidyl-prolyl cis-trans isomerase. This Leuconostoc mesenteroides subsp. mesenteroides (strain ATCC 8293 / DSM 20343 / BCRC 11652 / CCM 1803 / JCM 6124 / NCDO 523 / NBRC 100496 / NCIMB 8023 / NCTC 12954 / NRRL B-1118 / 37Y) protein is Trigger factor.